Here is a 343-residue protein sequence, read N- to C-terminus: Olfactory receptor 6K6 (343 aa).

Residues 1-53 (MKQYSVGNQHSNYRSLLFPFLCSQMTQLTASGNQTMVTEFLFSMFPHAHRGGL) lie on the Extracellular side of the membrane. N-linked (GlcNAc...) asparagine glycosylation occurs at asparagine 33. A helical membrane pass occupies residues 54–74 (LFFIPLLLIYGFILTGNLIMF). The Cytoplasmic segment spans residues 75–82 (IVIQVGMA). Residues 83 to 103 (LHTPLYFFISVLSFLEICYTT) traverse the membrane as a helical segment. The Extracellular portion of the chain corresponds to 104 to 127 (TTIPKMLSCLISEQKSISVAGCLL). Cysteine 125 and cysteine 217 are oxidised to a cystine. Residues 128 to 148 (QMYFFHSLGITESCVLTAMAI) traverse the membrane as a helical segment. The Cytoplasmic portion of the chain corresponds to 149–167 (DRYIAICNPLRYPTIMIPK). The chain crosses the membrane as a helical span at residues 168-188 (LCIQLTVGSCFCGFLLVLPEI). The Extracellular portion of the chain corresponds to 189–224 (AWISTLPFCGSNQIHQIFCDFTPVLSLACTDTFLVV). Residues 225 to 244 (IVDAIHAAEIVASFLVIALS) form a helical membrane-spanning segment. At 245–264 (YIRIIIVILGMHSAEGHHKA) the chain is on the cytoplasmic side. Residues 265–285 (FSTCAAHLAVFLLFFGSVAVM) form a helical membrane-spanning segment. At 286-298 (YLRFSATYSVFWD) the chain is on the extracellular side. A helical membrane pass occupies residues 299–319 (TAIAVTFVILAPFFNPIIYSL). Topologically, residues 320–343 (KNKDMKEAIGRLFHYQKRAGWAGK) are cytoplasmic.

Belongs to the G-protein coupled receptor 1 family.

The protein localises to the cell membrane. Odorant receptor. The protein is Olfactory receptor 6K6 (OR6K6) of Homo sapiens (Human).